A 222-amino-acid polypeptide reads, in one-letter code: Glutathione S-transferase A5 (222 aa).

Alanine 2 is modified (N-acetylalanine). In terms of domain architecture, GST N-terminal spans 3–83 (EKPKLHYSNA…YIASKYNLYG (81 aa)). Lysine 4 is modified (N6-succinyllysine). Residues tyrosine 9, arginine 45, 54–55 (QV), and 67–68 (QT) each bind glutathione. The 124-residue stretch at 85 to 208 (DMKERALIDM…QPGSQRKPPM (124 aa)) folds into the GST C-terminal domain.

It belongs to the GST superfamily. Alpha family. As to quaternary structure, homodimer. In terms of tissue distribution, expression not detected.

The protein localises to the cytoplasm. The enzyme catalyses RX + glutathione = an S-substituted glutathione + a halide anion + H(+). This is Glutathione S-transferase A5 (GSTA5) from Homo sapiens (Human).